A 319-amino-acid chain; its full sequence is Phospho-N-acetylmuramoyl-pentapeptide-transferase (319 aa).

The next 10 helical transmembrane spans lie at 5 to 25, 51 to 71, 79 to 99, 116 to 136, 149 to 169, 172 to 192, 197 to 217, 224 to 244, 252 to 272, and 299 to 319; these read LIPFISSFALTVIFLPLFIGF, TMGGVVFMLAGVISTLWVLIW, AWILIIAFLGYGIIGFLDDGI, LGQIIIAALIITLAFSDHFAF, SFLFSLFVLFWLVGFSNAVNL, GLDGLATGLSIIAYATYAWIA, NWVIVVFTLSVIGGLVGFFIF, IFMGDAGSLALGGGLATVSIF, LLIGIVFVLETLSVILQVISF, and VDIVFWIVGLIGSIIYLIIWG.

The protein belongs to the glycosyltransferase 4 family. MraY subfamily. Mg(2+) is required as a cofactor.

Its subcellular location is the cell membrane. The enzyme catalyses UDP-N-acetyl-alpha-D-muramoyl-L-alanyl-gamma-D-glutamyl-L-lysyl-D-alanyl-D-alanine + di-trans,octa-cis-undecaprenyl phosphate = Mur2Ac(oyl-L-Ala-gamma-D-Glu-L-Lys-D-Ala-D-Ala)-di-trans,octa-cis-undecaprenyl diphosphate + UMP. It functions in the pathway cell wall biogenesis; peptidoglycan biosynthesis. Catalyzes the initial step of the lipid cycle reactions in the biosynthesis of the cell wall peptidoglycan: transfers peptidoglycan precursor phospho-MurNAc-pentapeptide from UDP-MurNAc-pentapeptide onto the lipid carrier undecaprenyl phosphate, yielding undecaprenyl-pyrophosphoryl-MurNAc-pentapeptide, known as lipid I. This chain is Phospho-N-acetylmuramoyl-pentapeptide-transferase, found in Lactobacillus johnsonii (strain CNCM I-12250 / La1 / NCC 533).